Here is a 176-residue protein sequence, read N- to C-terminus: Ferritin, spleen middle subunit (176 aa).

Residues 7–156 enclose the Ferritin-like diiron domain; sequence QNYHRDCEAA…DFITNLSRMD (150 aa). Glu24, Glu59, His62, Glu104, and Gln138 together coordinate Fe cation.

The protein belongs to the ferritin family. In spleen, forms a homomer. The functional molecule forms a roughly spherical shell with a diameter of 12 nm and contains a central cavity into which the insoluble mineral iron core is deposited. In terms of tissue distribution, spleen (at protein level).

The enzyme catalyses 4 Fe(2+) + O2 + 4 H(+) = 4 Fe(3+) + 2 H2O. Stores iron in a soluble, non-toxic, readily available form. Important for iron homeostasis. Has ferroxidase activity. Iron is taken up in the ferrous form and deposited as ferric hydroxides after oxidation. The sequence is that of Ferritin, spleen middle subunit from Trematomus bernacchii (Emerald rockcod).